We begin with the raw amino-acid sequence, 143 residues long: uncharacterized protein (143 aa).

An N-terminal signal peptide occupies residues 1–24 (MKKMLMLAFTFLLALTIHVGEASA).

This is an uncharacterized protein from Bacillus subtilis (strain 168).